The primary structure comprises 196 residues: MILKLAKRYGLCGFIRLVRDVLLTRVFYRNCRIIRFPCYIRNDGSINFGENFTSGVGLRLDAFGRGVIFFSDNVQVNDYVHIASIESVTIGRDTLIASKVFITDHNHGSFKHSDPMSSPNIPPDMRTLESSAVVIGQRVWLGENVTVLPGTIIGNGVVVGANSVVRGSIPENTVIAGVPAKIIKKYNHETKLWEKA.

The protein belongs to the transferase hexapeptide repeat family.

The protein operates within bacterial outer membrane biogenesis; lipopolysaccharide biosynthesis. Functionally, putative O-acetyltransferase that transfers an O-acetyl group to the O antigen. This Escherichia coli (strain K12) protein is Putative lipopolysaccharide biosynthesis O-acetyl transferase WbbJ (wbbJ).